The following is a 463-amino-acid chain: Quinolone resistance protein NorB (463 aa).

14 consecutive transmembrane segments (helical) span residues 19–39 (IVLS…VVLI), 53–73 (IAVS…GGLA), 86–106 (IILN…LLLI), 107–127 (IGRL…LSII), 142–162 (YWSI…GAVA), 165–185 (LGWR…LFLI), 201–221 (FDIK…ILIT), 230–250 (SLLF…FIVL), 273–293 (TASN…NTFV), 299–319 (YSLL…LIMI), 334–354 (PMLI…LTFL), 357–377 (ILYV…LGIY), 403–423 (MASA…YAIV), and 435–455 (IALW…LLLV).

Belongs to the major facilitator superfamily. TCR/Tet family.

The protein resides in the cell membrane. In terms of biological role, multidrug efflux pump that acts independently of NorA and is one of the factors that confers resistance against diverse quinolones and chemical compounds. The sequence is that of Quinolone resistance protein NorB (norB) from Staphylococcus aureus (strain bovine RF122 / ET3-1).